Reading from the N-terminus, the 163-residue chain is Large ribosomal subunit protein uL10 (163 aa).

It belongs to the universal ribosomal protein uL10 family. Part of the ribosomal stalk of the 50S ribosomal subunit. The N-terminus interacts with L11 and the large rRNA to form the base of the stalk. The C-terminus forms an elongated spine to which L12 dimers bind in a sequential fashion forming a multimeric L10(L12)X complex.

Functionally, forms part of the ribosomal stalk, playing a central role in the interaction of the ribosome with GTP-bound translation factors. This Actinobacillus pleuropneumoniae serotype 5b (strain L20) protein is Large ribosomal subunit protein uL10.